The primary structure comprises 306 residues: Curved DNA-binding protein (306 aa).

The J domain maps to 5–69 (DYYAIMGVKP…QRRAEYDQMW (65 aa)).

It is found in the cytoplasm. The protein localises to the nucleoid. Its function is as follows. DNA-binding protein that preferentially recognizes a curved DNA sequence. It is probably a functional analog of DnaJ; displays overlapping activities with DnaJ, but functions under different conditions, probably acting as a molecular chaperone in an adaptive response to environmental stresses other than heat shock. Lacks autonomous chaperone activity; binds native substrates and targets them for recognition by DnaK. Its activity is inhibited by the binding of CbpM. In Escherichia coli O17:K52:H18 (strain UMN026 / ExPEC), this protein is Curved DNA-binding protein.